A 204-amino-acid polypeptide reads, in one-letter code: Peptide deformylase (204 aa).

Residues cysteine 131 and histidine 174 each contribute to the Fe cation site. Glutamate 175 is a catalytic residue. Position 178 (histidine 178) interacts with Fe cation.

The protein belongs to the polypeptide deformylase family. Fe(2+) is required as a cofactor.

The catalysed reaction is N-terminal N-formyl-L-methionyl-[peptide] + H2O = N-terminal L-methionyl-[peptide] + formate. Its function is as follows. Removes the formyl group from the N-terminal Met of newly synthesized proteins. Requires at least a dipeptide for an efficient rate of reaction. N-terminal L-methionine is a prerequisite for activity but the enzyme has broad specificity at other positions. This chain is Peptide deformylase, found in Streptococcus pyogenes serotype M1.